We begin with the raw amino-acid sequence, 196 residues long: Flagellar transcriptional regulator FlhC (196 aa).

Residues Cys-138, Cys-141, Cys-158, and Cys-161 each contribute to the Zn(2+) site.

It belongs to the FlhC family. Heterohexamer composed of two FlhC and four FlhD subunits. Each FlhC binds a FlhD dimer, forming a heterotrimer, and a hexamer assembles by dimerization of two heterotrimers. Zn(2+) is required as a cofactor.

The protein resides in the cytoplasm. Functionally, functions in complex with FlhD as a master transcriptional regulator that regulates transcription of several flagellar and non-flagellar operons by binding to their promoter region. Activates expression of class 2 flagellar genes, including fliA, which is a flagellum-specific sigma factor that turns on the class 3 genes. Also regulates genes whose products function in a variety of physiological pathways. In Sodalis glossinidius (strain morsitans), this protein is Flagellar transcriptional regulator FlhC.